The sequence spans 547 residues: Putative cysteine ligase BshC (547 aa).

Residues 462 to 484 (NLAEENLDRVIAQARFLRQKVEH) adopt a coiled-coil conformation.

This sequence belongs to the BshC family.

In terms of biological role, involved in bacillithiol (BSH) biosynthesis. May catalyze the last step of the pathway, the addition of cysteine to glucosamine malate (GlcN-Mal) to generate BSH. This is Putative cysteine ligase BshC from Heliobacterium modesticaldum (strain ATCC 51547 / Ice1).